A 353-amino-acid polypeptide reads, in one-letter code: 4-hydroxy-3-methylbut-2-en-1-yl diphosphate synthase (flavodoxin) (353 aa).

The [4Fe-4S] cluster site is built by C265, C268, C300, and E307.

This sequence belongs to the IspG family. The cofactor is [4Fe-4S] cluster.

The catalysed reaction is (2E)-4-hydroxy-3-methylbut-2-enyl diphosphate + oxidized [flavodoxin] + H2O + 2 H(+) = 2-C-methyl-D-erythritol 2,4-cyclic diphosphate + reduced [flavodoxin]. It participates in isoprenoid biosynthesis; isopentenyl diphosphate biosynthesis via DXP pathway; isopentenyl diphosphate from 1-deoxy-D-xylulose 5-phosphate: step 5/6. Its function is as follows. Converts 2C-methyl-D-erythritol 2,4-cyclodiphosphate (ME-2,4cPP) into 1-hydroxy-2-methyl-2-(E)-butenyl 4-diphosphate. The protein is 4-hydroxy-3-methylbut-2-en-1-yl diphosphate synthase (flavodoxin) of Sulfurihydrogenibium sp. (strain YO3AOP1).